Here is a 257-residue protein sequence, read N- to C-terminus: Acetylglutamate kinase (257 aa).

Substrate-binding positions include G43–G44, R65, and N157.

This sequence belongs to the acetylglutamate kinase family. ArgB subfamily.

Its subcellular location is the cytoplasm. It catalyses the reaction N-acetyl-L-glutamate + ATP = N-acetyl-L-glutamyl 5-phosphate + ADP. The protein operates within amino-acid biosynthesis; L-arginine biosynthesis; N(2)-acetyl-L-ornithine from L-glutamate: step 2/4. Catalyzes the ATP-dependent phosphorylation of N-acetyl-L-glutamate. The polypeptide is Acetylglutamate kinase (Mannheimia succiniciproducens (strain KCTC 0769BP / MBEL55E)).